An 898-amino-acid polypeptide reads, in one-letter code: Netrin receptor UNC5A (898 aa).

The signal sequence occupies residues methionine 1–alanine 25. Residues glutamine 26–leucine 361 are Extracellular-facing. The 98-residue stretch at proline 44–tyrosine 141 folds into the Ig-like domain. 3 cysteine pairs are disulfide-bonded: cysteine 65–cysteine 126, cysteine 77–cysteine 124, and cysteine 170–cysteine 221. Residues asparagine 107 and asparagine 218 are each glycosylated (N-linked (GlcNAc...) asparagine). In terms of domain architecture, Ig-like C2-type spans proline 155–serine 234. TSP type-1 domains follow at residues asparagine 242–proline 296 and aspartate 298–leucine 350. Tryptophan 245, tryptophan 248, and tryptophan 251 each carry a C-linked (Man) tryptophan glycan. 3 disulfides stabilise this stretch: cysteine 254-cysteine 291, cysteine 258-cysteine 295, and cysteine 269-cysteine 281. 2 C-linked (Man) tryptophan glycosylation sites follow: tryptophan 301 and tryptophan 304. Disulfide bonds link cysteine 310-cysteine 344, cysteine 314-cysteine 349, and cysteine 322-cysteine 334. The N-linked (GlcNAc...) asparagine glycan is linked to asparagine 343. Residues tyrosine 362–isoleucine 382 form a helical membrane-spanning segment. The Cytoplasmic portion of the chain corresponds to tyrosine 383–cysteine 898. The ZU5 domain occupies asparagine 497–alanine 640. Residues serine 661–lysine 679 form an interaction with DCC region. The 81-residue stretch at glutamine 817–glutamate 897 folds into the Death domain.

This sequence belongs to the unc-5 family. As to quaternary structure, homodimer and homooligomer. Interacts with the cytoplasmic part of DCC. Interacts with MAGED1. Interacts with PRKCABP, possibly mediating some interaction with PKC. Interacts (via extracellular domain) with FLRT2 (via extracellular domain). Interacts (via extracellular domain) with FLRT3 (via extracellular domain). In terms of processing, phosphorylated on cytoplasmic tyrosine residues. Phosphorylated by PKC in vitro. Post-translationally, proteolytically cleaved by caspases during apoptosis. The cleavage does not take place when the receptor is associated with netrin ligand. Its cleavage by caspases is required to induce apoptosis. The two extracellular TSRs of UNC5A contain WxxWxxWxxC motifs that can be C-mannosylated on all tryptophans. DPY19L1 preferentially mannosylates the first two tryptophans and DPY19L3 prefers the third. C-mannosylation by DPY19L1 is required for transport of UNC5A from the endoplasmic reticulum to the cell surface. In terms of tissue distribution, restricted to central nervous system.

The protein localises to the cell membrane. The protein resides in the membrane raft. It is found in the cell projection. It localises to the neuron projection. In terms of biological role, receptor for netrin required for axon guidance. Functions in the netrin signaling pathway and promotes neurite outgrowth in response to NTN1. Mediates axon repulsion of neuronal growth cones in the developing nervous system in response to netrin. Axon repulsion in growth cones may be mediated by its association with DCC that may trigger signaling for repulsion. It also acts as a dependence receptor required for apoptosis induction when not associated with netrin ligand. This Mus musculus (Mouse) protein is Netrin receptor UNC5A (Unc5a).